A 593-amino-acid polypeptide reads, in one-letter code: Proline dehydrogenase 1, mitochondrial (593 aa).

The segment at 24 to 44 (PAAREQPAAGPGAEPVCGPAE) is disordered. N6-acetyllysine is present on residues Lys-368 and Lys-479.

The protein belongs to the proline oxidase family. Requires FAD as cofactor.

Its subcellular location is the mitochondrion matrix. It carries out the reaction L-proline + a quinone = (S)-1-pyrroline-5-carboxylate + a quinol + H(+). It functions in the pathway amino-acid degradation; L-proline degradation into L-glutamate; L-glutamate from L-proline: step 1/2. In terms of biological role, converts proline to delta-1-pyrroline-5-carboxylate. This is Proline dehydrogenase 1, mitochondrial from Bos taurus (Bovine).